The sequence spans 98 residues: NADH-ubiquinone oxidoreductase chain 4L (98 aa).

A run of 3 helical transmembrane segments spans residues 1-21, 29-49, and 61-81; these read MSLT…GLLM, SLLC…MTIL, and IILL…LVMV.

It belongs to the complex I subunit 4L family. In terms of assembly, core subunit of respiratory chain NADH dehydrogenase (Complex I) which is composed of 45 different subunits.

The protein resides in the mitochondrion inner membrane. The catalysed reaction is a ubiquinone + NADH + 5 H(+)(in) = a ubiquinol + NAD(+) + 4 H(+)(out). Core subunit of the mitochondrial membrane respiratory chain NADH dehydrogenase (Complex I) which catalyzes electron transfer from NADH through the respiratory chain, using ubiquinone as an electron acceptor. Part of the enzyme membrane arm which is embedded in the lipid bilayer and involved in proton translocation. This is NADH-ubiquinone oxidoreductase chain 4L (MT-ND4L) from Stenoderma rufum (Red fruit bat).